The primary structure comprises 52 residues: Defensin-like protein 2B (52 aa).

4 disulfides stabilise this stretch: Cys-4-Cys-52, Cys-16-Cys-37, Cys-22-Cys-46, and Cys-26-Cys-48.

Forms oligomers in its native state.

Possesses antifungal activity sensitive to inorganic cations. This is Defensin-like protein 2B from Sinapis alba (White mustard).